A 363-amino-acid polypeptide reads, in one-letter code: Probable matrix metalloproteinase 095L (363 aa).

The first 25 residues, 1 to 25 (MSVDSFTSRLAVVMTAVVLVWWAQA), serve as a signal peptide directing secretion. Residues 26–126 (LPVPSPRRGE…PRCGVPDVSK (101 aa)) constitute a propeptide, activation peptide. The Cysteine switch signature appears at 117–124 (PRCGVPDV). Zn(2+) is bound by residues cysteine 119 and histidine 275. Glutamate 276 is a catalytic residue. 2 residues coordinate Zn(2+): histidine 279 and histidine 285.

It belongs to the peptidase M10A family. Requires Zn(2+) as cofactor.

Its subcellular location is the secreted. Functionally, probable endopeptidase. The protein is Probable matrix metalloproteinase 095L of Aedes vexans (Inland floodwater mosquito).